The primary structure comprises 873 residues: uncharacterized protein (873 aa).

Disordered regions lie at residues 1-24, 175-251, 375-423, 506-540, 568-592, 662-773, and 822-855; these read MSNKPDANDQCMVKETISRMSMSK, SSAV…TSIS, PSRH…AKKP, DSESASYNTDDANSVVSPSKDGISTTTVSSDATRS, DQSSRYPGRHFGKTGRSHFPRAPEY, ANDS…TSQI, and ANPYSTNNDGNPSNNTSDVEVNETSMNDNSEEPI. Over residues 211 to 225 the composition is skewed to basic and acidic residues; the sequence is KDSDRSQTKNTHEET. A compositionally biased stretch (basic residues) spans 376–385; sequence SRHHSHRKKE. The segment covering 574-586 has biased composition (basic residues); it reads PGRHFGKTGRSHF. Low complexity predominate over residues 665 to 686; the sequence is SPNSSESLESLNNQSYSSSPYS. Over residues 698–740 the composition is skewed to polar residues; sequence QSLNDSPQTSDFKASNLNDSSSNVHSIFQTRETTSPSVQNKTP. A compositionally biased stretch (basic and acidic residues) spans 743–755; that stretch reads YHRELKSSKDGHE. Over residues 758–773 the composition is skewed to low complexity; the sequence is SPLVSSSPSGSFTSQI. Over residues 823 to 855 the composition is skewed to polar residues; sequence NPYSTNNDGNPSNNTSDVEVNETSMNDNSEEPI.

Its subcellular location is the cytoplasm. It is found in the vacuole membrane. This is an uncharacterized protein from Schizosaccharomyces pombe (strain 972 / ATCC 24843) (Fission yeast).